The primary structure comprises 507 residues: ATP synthase subunit alpha, chloroplastic (507 aa).

170 to 177 lines the ATP pocket; sequence GDRQTGKT.

This sequence belongs to the ATPase alpha/beta chains family. F-type ATPases have 2 components, CF(1) - the catalytic core - and CF(0) - the membrane proton channel. CF(1) has five subunits: alpha(3), beta(3), gamma(1), delta(1), epsilon(1). CF(0) has four main subunits: a, b, b' and c.

The protein resides in the plastid. It localises to the chloroplast thylakoid membrane. It catalyses the reaction ATP + H2O + 4 H(+)(in) = ADP + phosphate + 5 H(+)(out). In terms of biological role, produces ATP from ADP in the presence of a proton gradient across the membrane. The alpha chain is a regulatory subunit. The sequence is that of ATP synthase subunit alpha, chloroplastic from Chloranthus spicatus (Chulantree).